Consider the following 177-residue polypeptide: NADH-quinone oxidoreductase subunit B (177 aa).

The [4Fe-4S] cluster site is built by Cys-56, Cys-57, Cys-121, and Cys-151.

Belongs to the complex I 20 kDa subunit family. As to quaternary structure, NDH-1 is composed of 14 different subunits. Subunits NuoB, C, D, E, F, and G constitute the peripheral sector of the complex. [4Fe-4S] cluster serves as cofactor.

It is found in the cell inner membrane. It carries out the reaction a quinone + NADH + 5 H(+)(in) = a quinol + NAD(+) + 4 H(+)(out). Functionally, NDH-1 shuttles electrons from NADH, via FMN and iron-sulfur (Fe-S) centers, to quinones in the respiratory chain. Couples the redox reaction to proton translocation (for every two electrons transferred, four hydrogen ions are translocated across the cytoplasmic membrane), and thus conserves the redox energy in a proton gradient. In Dinoroseobacter shibae (strain DSM 16493 / NCIMB 14021 / DFL 12), this protein is NADH-quinone oxidoreductase subunit B.